The sequence spans 624 residues: uncharacterized protein (624 aa).

The first 29 residues, 1 to 29 (MRFHRQGTAATVGVLLIVLLGFCWKLSES), serve as a signal peptide directing secretion. Residues asparagine 68, asparagine 150, asparagine 219, asparagine 366, asparagine 441, asparagine 447, asparagine 464, and asparagine 528 are each glycosylated (N-linked (GlcNAc...) asparagine). The tract at residues 141 to 174 (LERRHGRFGNGTHGDHPKGPPPPPPPDEKDRGSQ) is disordered.

The protein resides in the secreted. This is an uncharacterized protein from Saccharomyces cerevisiae (strain ATCC 204508 / S288c) (Baker's yeast).